We begin with the raw amino-acid sequence, 59 residues long: Transcription elongation factor Spt4 (59 aa).

4 residues coordinate Zn(2+): Cys-4, Cys-7, Cys-16, and Cys-19.

The protein belongs to the archaeal Spt4 family. In terms of assembly, heterodimer composed of Spt4 and Spt5.

Functionally, stimulates transcription elongation. The sequence is that of Transcription elongation factor Spt4 from Methanocaldococcus jannaschii (strain ATCC 43067 / DSM 2661 / JAL-1 / JCM 10045 / NBRC 100440) (Methanococcus jannaschii).